We begin with the raw amino-acid sequence, 374 residues long: F-box/LRR-repeat protein 8 (374 aa).

One can recognise an F-box domain in the interval 2–48 (AEPGEGLPEEVLALIFRHLSLRDRAAAARVCRAWAAAATCSAVWHDT).

In terms of assembly, directly interacts with SKP1 and CUL1.

Its function is as follows. Substrate-recognition component of the SCF (SKP1-CUL1-F-box protein)-type E3 ubiquitin ligase complex. In Homo sapiens (Human), this protein is F-box/LRR-repeat protein 8 (FBXL8).